Consider the following 456-residue polypeptide: Shufflon protein D' (456 aa).

Residues 1–361 (MKKYDRGWAS…TGAILSCQSG (361 aa)) are constant region. Positions 362–456 (TWRKSNSGST…KCSYVVACQN (95 aa)) are variable region.

The protein is Shufflon protein D' of Escherichia coli.